The chain runs to 210 residues: Prolactin (210 aa).

A signal peptide spans 1–23; that stretch reads MTQGSRLYFAVAVLMCGFVSING. 2 disulfide bridges follow: cysteine 69/cysteine 183 and cysteine 200/cysteine 210.

This sequence belongs to the somatotropin/prolactin family. In terms of tissue distribution, pituitary gland.

Its subcellular location is the secreted. The polypeptide is Prolactin (prl1) (Carassius auratus (Goldfish)).